A 226-amino-acid polypeptide reads, in one-letter code: Protein Thf1 (226 aa).

Positions 183–213 (EEKMQKDLDLYRSNLEKMDQLLTVIEEALQA) form a coiled coil.

This sequence belongs to the THF1 family.

Functionally, may be involved in photosynthetic membrane biogenesis. The chain is Protein Thf1 from Gloeothece citriformis (strain PCC 7424) (Cyanothece sp. (strain PCC 7424)).